The sequence spans 24 residues: Heptapoietin A light chain (24 aa).

As to quaternary structure, heterodimer of a heavy and a light chain linked by disulfide bond(s).

In terms of biological role, HPTA is an acidic heparin-binding growth factor for hepatocytes. The polypeptide is Heptapoietin A light chain (Oryctolagus cuniculus (Rabbit)).